A 363-amino-acid chain; its full sequence is Peptide chain release factor 1 (363 aa).

Q237 carries the post-translational modification N5-methylglutamine. The segment covering 284 to 296 has biased composition (basic and acidic residues); it reads EDEKRRSAEESTR. Positions 284 to 306 are disordered; the sequence is EDEKRRSAEESTRRSLVASGDRS.

Belongs to the prokaryotic/mitochondrial release factor family. Methylated by PrmC. Methylation increases the termination efficiency of RF1.

The protein resides in the cytoplasm. Peptide chain release factor 1 directs the termination of translation in response to the peptide chain termination codons UAG and UAA. The polypeptide is Peptide chain release factor 1 (Shewanella putrefaciens (strain CN-32 / ATCC BAA-453)).